We begin with the raw amino-acid sequence, 278 residues long: Ferredoxin--NADP reductase A (278 aa).

The region spanning 3 to 103 (PGYTEETVLE…KRATGTLTIG (101 aa)) is the FAD-binding FR-type domain. FAD contacts are provided by residues 52–55 (RAYS) and Thr-118.

Belongs to the ferredoxin--NADP reductase type 1 family. Requires FAD as cofactor.

The enzyme catalyses 2 reduced [4Fe-4S]-[ferredoxin] + NADP(+) + H(+) = 2 oxidized [4Fe-4S]-[ferredoxin] + NADPH. Its function is as follows. Transports electrons between NADPH and ferredoxin. Can transfer electrons to ferredoxins Fdx2 and Fdx8. Prefers NADPH to NADH. This chain is Ferredoxin--NADP reductase A, found in Sorangium cellulosum (strain So ce56) (Polyangium cellulosum (strain So ce56)).